Here is an 89-residue protein sequence, read N- to C-terminus: UPF0250 protein CV_3095 (89 aa).

This sequence belongs to the UPF0250 family.

This is UPF0250 protein CV_3095 from Chromobacterium violaceum (strain ATCC 12472 / DSM 30191 / JCM 1249 / CCUG 213 / NBRC 12614 / NCIMB 9131 / NCTC 9757 / MK).